A 662-amino-acid chain; its full sequence is UvrABC system protein B (662 aa).

The Helicase ATP-binding domain occupies 25–411 (DGIIAGDKFQ…STRIVEQVIR (387 aa)). 38–45 (GVTGSGKT) is an ATP binding site. The Beta-hairpin signature appears at 91 to 114 (YYDYYQPEAYVPARDLYIEKDASI). The Helicase C-terminal domain maps to 428–594 (QMEHIYGEVK…TIKKAIEDIL (167 aa)). The region spanning 625-660 (KKLIKKLEAQMAEYADMLMFEEAAVIRDKIEEVKRI) is the UVR domain.

Belongs to the UvrB family. As to quaternary structure, forms a heterotetramer with UvrA during the search for lesions. Interacts with UvrC in an incision complex.

It localises to the cytoplasm. The UvrABC repair system catalyzes the recognition and processing of DNA lesions. A damage recognition complex composed of 2 UvrA and 2 UvrB subunits scans DNA for abnormalities. Upon binding of the UvrA(2)B(2) complex to a putative damaged site, the DNA wraps around one UvrB monomer. DNA wrap is dependent on ATP binding by UvrB and probably causes local melting of the DNA helix, facilitating insertion of UvrB beta-hairpin between the DNA strands. Then UvrB probes one DNA strand for the presence of a lesion. If a lesion is found the UvrA subunits dissociate and the UvrB-DNA preincision complex is formed. This complex is subsequently bound by UvrC and the second UvrB is released. If no lesion is found, the DNA wraps around the other UvrB subunit that will check the other stand for damage. This is UvrABC system protein B from Treponema denticola (strain ATCC 35405 / DSM 14222 / CIP 103919 / JCM 8153 / KCTC 15104).